Here is a 572-residue protein sequence, read N- to C-terminus: Phosphoenolpyruvate-protein phosphotransferase (572 aa).

H190 serves as the catalytic Tele-phosphohistidine intermediate. Phosphoenolpyruvate is bound by residues R297 and R333. Mg(2+) is bound by residues E427 and D451. Phosphoenolpyruvate is bound by residues 450 to 451 (ND) and R461. C498 serves as the catalytic Proton donor.

This sequence belongs to the PEP-utilizing enzyme family. As to quaternary structure, homodimer. It depends on Mg(2+) as a cofactor.

The protein localises to the cytoplasm. The catalysed reaction is L-histidyl-[protein] + phosphoenolpyruvate = N(pros)-phospho-L-histidyl-[protein] + pyruvate. General (non sugar-specific) component of the phosphoenolpyruvate-dependent sugar phosphotransferase system (sugar PTS). This major carbohydrate active-transport system catalyzes the phosphorylation of incoming sugar substrates concomitantly with their translocation across the cell membrane. Enzyme I transfers the phosphoryl group from phosphoenolpyruvate (PEP) to the phosphoryl carrier protein (HPr). This Mycoplasma pneumoniae (strain ATCC 29342 / M129 / Subtype 1) (Mycoplasmoides pneumoniae) protein is Phosphoenolpyruvate-protein phosphotransferase (ptsI).